The following is a 686-amino-acid chain: Cyclic nucleotide-gated channel alpha-1 (686 aa).

At 1–165 the chain is on the cytoplasmic side; it reads MKNNIINTQQ…PSGNTYYNWL (165 aa). 2 disordered regions span residues 31 to 75 and 87 to 149; these read ENGA…PSQR and NVNN…EEKK. Residues 39-53 are compositionally biased toward acidic residues; that stretch reads SEDDDSASTSEESEN. Residues 110-124 show a composition bias toward basic and acidic residues; sequence SKSDDKNENKNDPEK. Residues 125 to 134 are compositionally biased toward basic residues; it reads KKKKKDKEKK. Residues 135–149 show a composition bias toward basic and acidic residues; the sequence is KKEEKSKDKKEEEKK. Residues 166-187 form a helical membrane-spanning segment; that stretch reads FCITLPVMYNWTMVIARACFDE. The Extracellular portion of the chain corresponds to 188–197; the sequence is LQSDYLEYWL. A helical transmembrane segment spans residues 198–218; the sequence is ILDYVSDIVYLIDMFVRTRTG. Over 219–243 the chain is Cytoplasmic; that stretch reads YLEQGLLVKEELKLINKYKSNLQFK. A helical transmembrane segment spans residues 244-262; sequence LDVLSLIPTDLLYFKLGWN. Residues 263 to 267 are Extracellular-facing; it reads YPEIR. The chain crosses the membrane as a helical span at residues 268–286; sequence LNRLLRFSRMFEFFQRTET. Residues 287–293 lie on the Cytoplasmic side of the membrane; the sequence is RTNYPNI. Residues 291 to 399 are ion conduction pathway; the sequence is PNIFRISNLV…GNIGSMISNM (109 aa). The helical transmembrane segment at 294–317 threads the bilayer; the sequence is FRISNLVMYIVIIIHWNACVFYSI. At 318 to 340 the chain is on the extracellular side; sequence SKAIGFGNDTWVYPDINDPEFGR. Asn-325 is a glycosylation site (N-linked (GlcNAc...) asparagine). Transmembrane regions (helical) follow at residues 341–375 and 376–400; these read LARKYVYSLYWSTLTLTTIGETPPPVRDSEYVFVV and VDFLIGVLIFATIVGNIGSMISNMN. Residues 358 to 361 form a selectivity filter region; that stretch reads TIGE. Positions 401–477 are C-linker; that stretch reads AARAEFQARI…DTLKKVRIFA (77 aa). Over 401 to 686 the chain is Cytoplasmic; it reads AARAEFQARI…GAESGPIDST (286 aa). Residues 481 to 601 form a cyclic nucleotide-binding domain region; the sequence is AGLLVELVLK…EEKGKQILMK (121 aa). 3',5'-cyclic GMP-binding residues include Gly-541, Ser-544, Arg-557, and Thr-558. 3',5'-cyclic AMP contacts are provided by Arg-557 and Thr-558. Positions 619–673 form a coiled coil; that stretch reads LEEKVTRMEGSVDLLQTRFARILAEYESMQQKLKQRLTKVEKFLKPLIDTEFSSI.

The protein belongs to the cyclic nucleotide-gated cation channel (TC 1.A.1.5) family. CNGA1 subfamily. Forms heterotetrameric channels composed of CNGA1 and CNGB1 subunits with 3:1 stoichiometry. May also form cyclic nucleotide-activated homotetrameric channels, that are efficiently activated by saturating cGMP, but poorly activated by saturating cAMP compared to the heterotetramer with CNGB1. The channel binds Ca(2+)-bound CALM1 via CaM1 and CaM2 regions of the CNGB1 subunit; this interaction modulates the affinity of the channel for cNMPs in response to intracellular Ca(2+) levels. In terms of tissue distribution, rod cells in the retina.

It localises to the cell membrane. It catalyses the reaction Ca(2+)(in) = Ca(2+)(out). The catalysed reaction is Na(+)(in) = Na(+)(out). It carries out the reaction K(+)(in) = K(+)(out). The enzyme catalyses NH4(+)(in) = NH4(+)(out). It catalyses the reaction Rb(+)(in) = Rb(+)(out). The catalysed reaction is Li(+)(in) = Li(+)(out). It carries out the reaction Cs(+)(in) = Cs(+)(out). With respect to regulation, channel opening is activated by cGMP and at a much lesser extent by cAMP. Ca(2+) binding concominantly blocks monovalent cation currents. Inhibited by L-cis-diltiazem. Pore-forming subunit of the rod cyclic nucleotide-gated channel. Mediates rod photoresponses at dim light converting transient changes in intracellular cGMP levels into electrical signals. In the dark, cGMP levels are high and keep the channel open enabling a steady inward current carried by Na(+) and Ca(2+) ions that leads to membrane depolarization and neurotransmitter release from synaptic terminals. Upon photon absorption cGMP levels decline leading to channel closure and membrane hyperpolarization that ultimately slows neurotransmitter release and signals the presence of light, the end point of the phototransduction cascade. Conducts cGMP- and cAMP-gated ion currents, with permeability for monovalent and divalent cations. The selectivity for Ca(2+) over Na(+) increases with cGMP concentrations, whereas the selectivity among monovalent ions is independent of the cGMP levels. The protein is Cyclic nucleotide-gated channel alpha-1 of Homo sapiens (Human).